A 210-amino-acid polypeptide reads, in one-letter code: Selenoprotein T2 (210 aa).

The N-terminal stretch at 1–21 is a signal peptide; sequence MAEYSQTGILTALLLFTVVTV. The segment at residues 62 to 65 is a cross-link (cysteinyl-selenocysteine (Cys-Sec)); the sequence is CISU. Residue selenocysteine 65 is a non-standard amino acid, selenocysteine.

Belongs to the SelWTH family. Selenoprotein T subfamily. May contain a selenide-sulfide bond between Cys-62 and Sec-65. This bond is speculated to serve as redox-active pair. In terms of tissue distribution, widely expressed in the embryo.

The sequence is that of Selenoprotein T2 from Danio rerio (Zebrafish).